The following is a 360-amino-acid chain: Arginase, non-hepatic 2 (360 aa).

Mn(2+) contacts are provided by His-122, Asp-145, His-147, and Asp-149. Substrate-binding positions include His-147–Asn-151, Ser-158–Asn-160, and Asp-204. 2 residues coordinate Mn(2+): Asp-253 and Asp-255. Substrate contacts are provided by Thr-267 and Glu-298.

This sequence belongs to the arginase family. Homotrimer. Mn(2+) serves as cofactor. In terms of tissue distribution, expressed at differing tadpole stages in tail, intestine, hindlimb and trunk region. Strongest in tadpole tail.

It carries out the reaction L-arginine + H2O = urea + L-ornithine. It participates in nitrogen metabolism; urea cycle; L-ornithine and urea from L-arginine: step 1/1. As well as its role in the urea cycle, may be involved in tissue remodeling. This is Arginase, non-hepatic 2 (arg2-b) from Xenopus laevis (African clawed frog).